Consider the following 238-residue polypeptide: Survival of motor neuron-related-splicing factor 30 (238 aa).

Positions 72 to 132 (SWKVGEKCMA…RPVEEGRKAK (61 aa)) constitute a Tudor domain. The Nuclear localization signal motif lies at 142–160 (KKEMIAAQREYKKKKALKK).

Belongs to the SMN family. Associates with spliceosomes.

The protein localises to the nucleus speckle. It is found in the nucleus. Its subcellular location is the cajal body. Involved in spliceosome assembly. The protein is Survival of motor neuron-related-splicing factor 30 (smndc1) of Xenopus tropicalis (Western clawed frog).